The primary structure comprises 510 residues: Putative thymidine phosphorylase (510 aa).

This sequence belongs to the thymidine/pyrimidine-nucleoside phosphorylase family. Type 2 subfamily.

The enzyme catalyses thymidine + phosphate = 2-deoxy-alpha-D-ribose 1-phosphate + thymine. This is Putative thymidine phosphorylase from Nitrobacter hamburgensis (strain DSM 10229 / NCIMB 13809 / X14).